The chain runs to 636 residues: MLTPTQQVGLILQYLKTRILDIYTPEQRAGIEKSEDWRQFSRRMDTHFPKLMNELDSVYGNNEALLPMLEMLLAQAWQSYSQRNSSLKDIDIARENNPDWILSNKQVGGVCYVDLFAGDLKGLKDKIPYFQELGLTYLHLMPLFKCPEGKSDGGYAVSSYRDVNPALGTIGDLREVIAALHEAGISAVVDFIFNHTSNEHEWAQRCAAGDPLFDNFYYIFPDRRMPDQYDRTLREIFPDQHPGGFSQLEDGRWVWTTFNSFQWDLNYSNPWVFRAMAGEMLFLANLGVDILRMDAVAFIWKQMGTSCENLPQAHALIRAFNAVMRIAAPAVFFKSEAIVHPDQVVQYIGQDECQIGYNPLQMALLWNTLATREVNLLHQALTYRHNLPEHTAWVNYVRSHDDIGWTFADEDAAYLGISGYDHRQFLNRFFVNRFDGSFARGVPFQYNPSTGDCRVSGTAAALVGLAQDDPHAVDRIKLLYSIALSTGGLPLIYLGDEVGTLNDDDWSQDSNKSDDSRWAHRPRYNEALYAQRNDPSTAAGQIYQGLRHMIAVRQSNPRFDGGRLVTFNTNNKHIIGYIRNNALLAFGNFSEYPQTVTAHTLQAMPFKAHDLIGGKTVSLNQDLTLQPYQVMWLEIA.

Aspartate 152, histidine 195, glutamine 262, and arginine 292 together coordinate substrate. Residue aspartate 294 is the Nucleophile of the active site. The active-site Proton donor is glutamate 336. Residues histidine 400, aspartate 401, and arginine 517 each coordinate substrate.

The protein belongs to the glycosyl hydrolase 13 family. As to quaternary structure, monomer.

Its subcellular location is the secreted. It catalyses the reaction [(1-&gt;4)-alpha-D-glucosyl](n) + sucrose = [(1-&gt;4)-alpha-D-glucosyl](n+1) + D-fructose. Amylosucrase favors hydrolysis at low sucrose concentrations, and polymerization at high sucrose concentrations. Competitively inhibited by fructose. Its function is as follows. Catalyzes the synthesis of alpha-glucan from sucrose. Catalyzes, in addition, sucrose hydrolysis, maltose and maltotriose synthesis by successive transfers of the glucosyl moiety of sucrose onto the released glucose, and finally turanose and trehalulose synthesis, these two sucrose isomers being obtained by glucosyl transfer onto fructose. This Neisseria polysaccharea protein is Amylosucrase (ams).